The chain runs to 228 residues: 2-C-methyl-D-erythritol 4-phosphate cytidylyltransferase (228 aa).

The protein belongs to the IspD/TarI cytidylyltransferase family. IspD subfamily.

The enzyme catalyses 2-C-methyl-D-erythritol 4-phosphate + CTP + H(+) = 4-CDP-2-C-methyl-D-erythritol + diphosphate. Its pathway is isoprenoid biosynthesis; isopentenyl diphosphate biosynthesis via DXP pathway; isopentenyl diphosphate from 1-deoxy-D-xylulose 5-phosphate: step 2/6. In terms of biological role, catalyzes the formation of 4-diphosphocytidyl-2-C-methyl-D-erythritol from CTP and 2-C-methyl-D-erythritol 4-phosphate (MEP). The protein is 2-C-methyl-D-erythritol 4-phosphate cytidylyltransferase of Actinobacillus pleuropneumoniae serotype 3 (strain JL03).